The primary structure comprises 374 residues: UPF0674 endoplasmic reticulum membrane protein C2G5.01 (374 aa).

Residues 49–68 form a helical membrane-spanning segment; the sequence is FRLEFVILACFFLYVFSFIT. The N-linked (GlcNAc...) asparagine glycan is linked to Asn287. Residues 335–374 are disordered; it reads KAAKKKVKSSGDISKLSESDQKKRMERERQRKMRRRAKKM. Basic and acidic residues predominate over residues 349–363; the sequence is KLSESDQKKRMERER. Basic residues predominate over residues 364–374; that stretch reads QRKMRRRAKKM.

This sequence belongs to the UPF0674 family.

The protein resides in the endoplasmic reticulum membrane. In Schizosaccharomyces pombe (strain 972 / ATCC 24843) (Fission yeast), this protein is UPF0674 endoplasmic reticulum membrane protein C2G5.01.